The following is a 148-amino-acid chain: Large ribosomal subunit protein bL9 (148 aa).

Belongs to the bacterial ribosomal protein bL9 family.

Functionally, binds to the 23S rRNA. This chain is Large ribosomal subunit protein bL9, found in Pseudomonas syringae pv. tomato (strain ATCC BAA-871 / DC3000).